The sequence spans 24 residues: Large ribosomal subunit protein uL10 (24 aa).

It belongs to the universal ribosomal protein uL10 family. Part of the ribosomal stalk of the 50S ribosomal subunit. The N-terminus interacts with L11 and the large rRNA to form the base of the stalk. The C-terminus forms an elongated spine to which L12 dimers bind in a sequential fashion forming a multimeric L10(L12)X complex.

Forms part of the ribosomal stalk, playing a central role in the interaction of the ribosome with GTP-bound translation factors. This chain is Large ribosomal subunit protein uL10 (rplJ), found in Enterobacter cloacae.